The sequence spans 224 residues: Thiamine-phosphate synthase (224 aa).

4-amino-2-methyl-5-(diphosphooxymethyl)pyrimidine is bound by residues 41-45 (QFRDK) and Asp-77. Mg(2+) is bound by residues Asp-78 and Asp-97. Ser-116 lines the 4-amino-2-methyl-5-(diphosphooxymethyl)pyrimidine pocket. 143 to 145 (TNS) contributes to the 2-[(2R,5Z)-2-carboxy-4-methylthiazol-5(2H)-ylidene]ethyl phosphate binding site. Lys-146 lines the 4-amino-2-methyl-5-(diphosphooxymethyl)pyrimidine pocket. 2-[(2R,5Z)-2-carboxy-4-methylthiazol-5(2H)-ylidene]ethyl phosphate is bound by residues Gly-174 and 194 to 195 (IS).

Belongs to the thiamine-phosphate synthase family. The cofactor is Mg(2+).

The catalysed reaction is 2-[(2R,5Z)-2-carboxy-4-methylthiazol-5(2H)-ylidene]ethyl phosphate + 4-amino-2-methyl-5-(diphosphooxymethyl)pyrimidine + 2 H(+) = thiamine phosphate + CO2 + diphosphate. The enzyme catalyses 2-(2-carboxy-4-methylthiazol-5-yl)ethyl phosphate + 4-amino-2-methyl-5-(diphosphooxymethyl)pyrimidine + 2 H(+) = thiamine phosphate + CO2 + diphosphate. It catalyses the reaction 4-methyl-5-(2-phosphooxyethyl)-thiazole + 4-amino-2-methyl-5-(diphosphooxymethyl)pyrimidine + H(+) = thiamine phosphate + diphosphate. The protein operates within cofactor biosynthesis; thiamine diphosphate biosynthesis; thiamine phosphate from 4-amino-2-methyl-5-diphosphomethylpyrimidine and 4-methyl-5-(2-phosphoethyl)-thiazole: step 1/1. Condenses 4-methyl-5-(beta-hydroxyethyl)thiazole monophosphate (THZ-P) and 2-methyl-4-amino-5-hydroxymethyl pyrimidine pyrophosphate (HMP-PP) to form thiamine monophosphate (TMP). The sequence is that of Thiamine-phosphate synthase from Latilactobacillus sakei subsp. sakei (strain 23K) (Lactobacillus sakei subsp. sakei).